The primary structure comprises 382 residues: Anhydro-N-acetylmuramic acid kinase (382 aa).

An ATP-binding site is contributed by 9-16 (GTSLDGID).

Belongs to the anhydro-N-acetylmuramic acid kinase family.

It catalyses the reaction 1,6-anhydro-N-acetyl-beta-muramate + ATP + H2O = N-acetyl-D-muramate 6-phosphate + ADP + H(+). The protein operates within amino-sugar metabolism; 1,6-anhydro-N-acetylmuramate degradation. It functions in the pathway cell wall biogenesis; peptidoglycan recycling. Its function is as follows. Catalyzes the specific phosphorylation of 1,6-anhydro-N-acetylmuramic acid (anhMurNAc) with the simultaneous cleavage of the 1,6-anhydro ring, generating MurNAc-6-P. Is required for the utilization of anhMurNAc either imported from the medium or derived from its own cell wall murein, and thus plays a role in cell wall recycling. This is Anhydro-N-acetylmuramic acid kinase from Bacillus cereus (strain ZK / E33L).